The primary structure comprises 373 residues: Protein phosphatase 1K, mitochondrial (373 aa).

Positions Lys-95 to Phe-347 constitute a PPM-type phosphatase domain. Mg(2+)-binding residues include Asp-128, Gly-129, and Asp-338.

The protein belongs to the PP2C family. The cofactor is Mg(2+). Mn(2+) serves as cofactor.

It is found in the mitochondrion matrix. It catalyses the reaction O-phospho-L-seryl-[protein] + H2O = L-seryl-[protein] + phosphate. The enzyme catalyses O-phospho-L-threonyl-[protein] + H2O = L-threonyl-[protein] + phosphate. In Xenopus laevis (African clawed frog), this protein is Protein phosphatase 1K, mitochondrial (ppm1k).